A 68-amino-acid polypeptide reads, in one-letter code: Molybdenum-pterin-binding protein 2 (68 aa).

The Mop domain maps to 2–68 (SISARNQLKG…VKSTDVMILA (67 aa)).

In terms of biological role, binds one mole of molybdenum per mole of protein and contains a pterin. The protein is Molybdenum-pterin-binding protein 2 (mopII) of Clostridium pasteurianum.